The following is a 122-amino-acid chain: Ribonuclease P protein component (122 aa).

The protein belongs to the RnpA family. As to quaternary structure, consists of a catalytic RNA component (M1 or rnpB) and a protein subunit.

It carries out the reaction Endonucleolytic cleavage of RNA, removing 5'-extranucleotides from tRNA precursor.. Its function is as follows. RNaseP catalyzes the removal of the 5'-leader sequence from pre-tRNA to produce the mature 5'-terminus. It can also cleave other RNA substrates such as 4.5S RNA. The protein component plays an auxiliary but essential role in vivo by binding to the 5'-leader sequence and broadening the substrate specificity of the ribozyme. This is Ribonuclease P protein component from Roseiflexus sp. (strain RS-1).